Reading from the N-terminus, the 318-residue chain is Dimethyladenosine transferase (318 aa).

S-adenosyl-L-methionine is bound by residues His37, Leu39, Gly64, Glu85, Asp113, and Asn128.

The protein belongs to the class I-like SAM-binding methyltransferase superfamily. rRNA adenine N(6)-methyltransferase family.

It localises to the cytoplasm. It is found in the nucleus. Its subcellular location is the nucleolus. The catalysed reaction is adenosine(1779)/adenosine(1780) in 18S rRNA + 4 S-adenosyl-L-methionine = N(6)-dimethyladenosine(1779)/N(6)-dimethyladenosine(1780) in 18S rRNA + 4 S-adenosyl-L-homocysteine + 4 H(+). In terms of biological role, specifically dimethylates two adjacent adenosines in the loop of a conserved hairpin near the 3'-end of 18S rRNA in the 40S particle. This Saccharomyces cerevisiae (strain ATCC 204508 / S288c) (Baker's yeast) protein is Dimethyladenosine transferase.